Here is an 81-residue protein sequence, read N- to C-terminus: Cell division protein ZapB (81 aa).

The stretch at 5–81 forms a coiled coil; that stretch reads LEVFEKLEAK…QALLGRMEEV (77 aa). Lys-10 bears the N6-acetyllysine mark. Residues 36–67 form a disordered region; the sequence is NNSLSQEVQNAQHQREELERENNHLKEQQNGW. Residues 37–47 show a composition bias toward polar residues; the sequence is NSLSQEVQNAQ. The segment covering 48-62 has biased composition (basic and acidic residues); the sequence is HQREELERENNHLKE.

This sequence belongs to the ZapB family. As to quaternary structure, homodimer. The ends of the coiled-coil dimer bind to each other, forming polymers. Interacts with FtsZ.

It is found in the cytoplasm. Its function is as follows. Non-essential, abundant cell division factor that is required for proper Z-ring formation. It is recruited early to the divisome by direct interaction with FtsZ, stimulating Z-ring assembly and thereby promoting cell division earlier in the cell cycle. Its recruitment to the Z-ring requires functional FtsA or ZipA. This Shigella boydii serotype 4 (strain Sb227) protein is Cell division protein ZapB.